We begin with the raw amino-acid sequence, 409 residues long: uncharacterized protein (409 aa).

The N-terminal stretch at M1 to A26 is a signal peptide.

This is an uncharacterized protein from Bacillus subtilis (strain 168).